Here is a 32-residue protein sequence, read N- to C-terminus: uncharacterized protein (32 aa).

This is an uncharacterized protein from Ornithodoros (relapsing fever ticks).